The primary structure comprises 485 residues: Cysteine--tRNA ligase (485 aa).

A Zn(2+)-binding site is contributed by Cys27. The 'HIGH' region signature appears at 29-39 (ITAYDLCHIGH). Residues Cys208, His233, and Glu237 each contribute to the Zn(2+) site. Residues 265–269 (KMSKS) carry the 'KMSKS' region motif. Lys268 contacts ATP.

The protein belongs to the class-I aminoacyl-tRNA synthetase family. As to quaternary structure, monomer. The cofactor is Zn(2+).

The protein resides in the cytoplasm. It catalyses the reaction tRNA(Cys) + L-cysteine + ATP = L-cysteinyl-tRNA(Cys) + AMP + diphosphate. This is Cysteine--tRNA ligase from Nitratidesulfovibrio vulgaris (strain ATCC 29579 / DSM 644 / CCUG 34227 / NCIMB 8303 / VKM B-1760 / Hildenborough) (Desulfovibrio vulgaris).